The primary structure comprises 133 residues: DNA-directed RNA polymerase subunit omega (133 aa).

This sequence belongs to the RNA polymerase subunit omega family. The RNAP catalytic core consists of 2 alpha, 1 beta, 1 beta' and 1 omega subunit. When a sigma factor is associated with the core the holoenzyme is formed, which can initiate transcription.

The catalysed reaction is RNA(n) + a ribonucleoside 5'-triphosphate = RNA(n+1) + diphosphate. Functionally, promotes RNA polymerase assembly. Latches the N- and C-terminal regions of the beta' subunit thereby facilitating its interaction with the beta and alpha subunits. This Brucella canis (strain ATCC 23365 / NCTC 10854 / RM-666) protein is DNA-directed RNA polymerase subunit omega.